The following is a 347-amino-acid chain: Heat-inducible transcription repressor HrcA (347 aa).

It belongs to the HrcA family.

In terms of biological role, negative regulator of class I heat shock genes (grpE-dnaK-dnaJ and groELS operons). Prevents heat-shock induction of these operons. The protein is Heat-inducible transcription repressor HrcA of Mycoplasmopsis pulmonis (strain UAB CTIP) (Mycoplasma pulmonis).